Here is a 28-residue protein sequence, read N- to C-terminus: M-poneritoxin-Da4b (28 aa).

An Alanine amide modification is found at alanine 28.

In terms of tissue distribution, expressed by the venom gland.

The protein resides in the secreted. In terms of biological role, the synthetic peptide has antimicrobial activity against the Gram-positive bacteria B.amyloliquefacies S499 (MIC=0.05 mM), L.monocytogenes 2231 and S.aureus ATCC 29213, against the Gram-negative bacteria P.putida BTP1, P.aeruginosa PaO1 and E.coli ATCC 10536, and against the fungi S.cerevisiae, R.mucilaginosa and C.cucumerinum. It is not active against the fungi F.oxysporum and B.cinerea. The polypeptide is M-poneritoxin-Da4b (Dinoponera australis (Giant neotropical hunting ant)).